Reading from the N-terminus, the 227-residue chain is (S)-2-haloacid dehalogenase 1 (227 aa).

Residue D10 is the Nucleophile of the active site. Residues 11–12, R41, and 118–119 each bind an (S)-2-haloacid; these read AY and SN. The important for catalytic activity stretch occupies residues 175 to 180; sequence SSNAWD.

This sequence belongs to the HAD-like hydrolase superfamily. S-2-haloalkanoic acid dehalogenase family.

The catalysed reaction is an (S)-2-haloacid + H2O = a (2R)-2-hydroxycarboxylate + a halide anion + H(+). It catalyses the reaction (S)-2-chloropropanoate + H2O = (R)-lactate + chloride + H(+). Its function is as follows. Catalyzes the hydrolytic dehalogenation of small (S)-2-haloalkanoic acids to yield the corresponding (R)-2-hydroxyalkanoic acids. Acts on acids of short chain lengths, C(2) to C(4), with inversion of configuration at C-2. Active with 2-halogenated carboxylic acids and converts only the S-isomer (or L-isomer) of 2-chloropropionic acid with inversion of configuration to produce R-lactate (or D-isomer). This is (S)-2-haloacid dehalogenase 1 from Pseudomonas sp. (strain CBS-3).